The primary structure comprises 101 residues: Small ribosomal subunit protein uS10 (101 aa).

Belongs to the universal ribosomal protein uS10 family. Part of the 30S ribosomal subunit.

Its function is as follows. Involved in the binding of tRNA to the ribosomes. The chain is Small ribosomal subunit protein uS10 from Corynebacterium jeikeium (strain K411).